The primary structure comprises 239 residues: Putative 3-methyladenine DNA glycosylase (239 aa).

The protein belongs to the DNA glycosylase MPG family.

This is Putative 3-methyladenine DNA glycosylase from Pseudomonas aeruginosa (strain UCBPP-PA14).